Reading from the N-terminus, the 256-residue chain is Protein FixA (256 aa).

The protein belongs to the ETF beta-subunit/FixA family. Heterodimer of FixA and FixB.

It participates in amine and polyamine metabolism; carnitine metabolism. Its function is as follows. Required for anaerobic carnitine reduction. May bring reductant to CaiA. The chain is Protein FixA from Escherichia coli O6:H1 (strain CFT073 / ATCC 700928 / UPEC).